A 293-amino-acid chain; its full sequence is Xyloglucan endotransglucosylase/hydrolase protein 31 (293 aa).

An N-terminal signal peptide occupies residues methionine 1 to serine 20. One can recognise a GH16 domain in the interval tyrosine 29–tyrosine 230. Glutamate 114 (nucleophile) is an active-site residue. Catalysis depends on glutamate 118, which acts as the Proton donor. Residues glutamate 118, glutamine 131 to asparagine 133, aspartate 141 to glutamate 148, and aspartate 209 to tryptophan 210 contribute to the xyloglucan site. Intrachain disulfides connect cysteine 238-cysteine 246 and cysteine 280-cysteine 293. Arginine 285 contributes to the xyloglucan binding site.

It belongs to the glycosyl hydrolase 16 family. XTH group 3 subfamily. Interacts with XTH17. The formation of an XTH17-XTH31 dimer may be required for XET activity. Post-translationally, contains at least one intrachain disulfide bond essential for its enzymatic activity. Predominantly expressed in root. Weakly expressed in influorescence stems. Expressed in root tips and elongation zones, stems, young leaves, flowers and siliques. Expressed in root, hypocotyl, and etiolated whole seedlings.

The protein localises to the secreted. Its subcellular location is the cell wall. The protein resides in the extracellular space. It is found in the apoplast. It localises to the cell membrane. It catalyses the reaction breaks a beta-(1-&gt;4) bond in the backbone of a xyloglucan and transfers the xyloglucanyl segment on to O-4 of the non-reducing terminal glucose residue of an acceptor, which can be a xyloglucan or an oligosaccharide of xyloglucan.. It carries out the reaction xyloglucan + H2O = xyloglucan oligosaccharides.. Catalyzes xyloglucan endohydrolysis (XEH) and/or endotransglycosylation (XET). Cleaves and religates xyloglucan polymers, an essential constituent of the primary cell wall, and thereby participates in cell wall construction of growing tissues. Involved in the accumulation of hemicelluloses. Has a high XEH activity and only a slight XET activity in vitro, but the main in planta activity seems to be XET, thus controlling aluminum sensitivity. Acceptor preferences are XXXGol = XXFGol &gt; XXLGol &gt; XLLGol = XLFGol. The sequence is that of Xyloglucan endotransglucosylase/hydrolase protein 31 from Arabidopsis thaliana (Mouse-ear cress).